The following is an 816-amino-acid chain: Phosphatidylinositol 4-kinase beta (816 aa).

Disordered stretches follow at residues 1–30 (MGDM…GSLL), 101–120 (EDEM…RRRR), and 250–318 (RKRE…SFSS). Residue Gly2 is modified to N-acetylglycine. The interval 2–68 (GDMVVEPATL…VKLLHGGVAI (67 aa)) is interaction with ACBD3. The segment covering 10–30 (TLKPTSEPTPSPSGNNGGSLL) has biased composition (low complexity). The PIK helical domain occupies 52-242 (CQEVLEKVKL…GTKLRKLILS (191 aa)). Residue Ser258 is modified to Phosphoserine. Thr263 carries the post-translational modification Phosphothreonine. 5 positions are modified to phosphoserine: Ser266, Ser275, Ser277, Ser284, and Ser294. Polar residues-rich tracts occupy residues 278–297 (DATA…SNPK) and 306–318 (SSST…SFSS). At Ser428 the chain carries Phosphoserine. Thr438 carries the phosphothreonine modification. Position 511 is a phosphoserine (Ser511). A phosphothreonine mark is found at Thr517 and Thr519. One can recognise a PI3K/PI4K catalytic domain in the interval 535–801 (EPWQEKVRRI…MVDGSMRSIT (267 aa)). Residues 541–547 (VRRIREG) are G-loop. The interval 668–676 (QVKDRHNGN) is catalytic loop. The segment at 687–711 (HIDFGFILSSSPRNLGFETSAFKLT) is activation loop.

It belongs to the PI3/PI4-kinase family. Type III PI4K subfamily. In terms of assembly, interacts with ARF1 and ARF3 in the Golgi complex, but not with ARF4, ARF5 or ARF6. Interacts with NCS1/FREQ in a calcium-independent manner. Interacts with CALN1/CABP8 and CALN2/CABP7; in a calcium-dependent manner; this interaction competes with NCS1/FREQ binding. Interacts with ACBD3. Interacts with ARMH3, YWHAB, YWHAE, YWHAG, YWHAH, YWHAQ, YWHAZ and SFN. Interacts with GGA2 (via VHS domain); the interaction is important for PI4KB location at the Golgi apparatus membrane. Interacts with ATG9A. Requires Mg(2+) as cofactor. The cofactor is Mn(2+).

It localises to the endomembrane system. Its subcellular location is the mitochondrion outer membrane. The protein localises to the rough endoplasmic reticulum membrane. It is found in the golgi apparatus. The protein resides in the golgi apparatus membrane. It catalyses the reaction a 1,2-diacyl-sn-glycero-3-phospho-(1D-myo-inositol) + ATP = a 1,2-diacyl-sn-glycero-3-phospho-(1D-myo-inositol 4-phosphate) + ADP + H(+). With respect to regulation, inhibited by wortmannin. Increased kinase activity upon interaction with NCS1/FREQ. Phosphorylates phosphatidylinositol (PI) in the first committed step in the production of the second messenger inositol-1,4,5,-trisphosphate (PIP). May regulate Golgi disintegration/reorganization during mitosis, possibly via its phosphorylation. Involved in Golgi-to-plasma membrane trafficking. May play an important role in the inner ear development. This is Phosphatidylinositol 4-kinase beta (Pi4kb) from Mus musculus (Mouse).